A 721-amino-acid polypeptide reads, in one-letter code: Peptide-N(4)-(N-acetyl-beta-glucosaminyl)asparagine amidase (721 aa).

Residues C193, C196, C225, and C228 each contribute to the Zn(2+) site. The active-site Nucleophile is C251. Catalysis depends on residues H278 and D295.

The protein belongs to the transglutaminase-like superfamily. PNGase family. The cofactor is Zn(2+).

The protein resides in the cytoplasm. It carries out the reaction Hydrolysis of an N(4)-(acetyl-beta-D-glucosaminyl)asparagine residue in which the glucosamine residue may be further glycosylated, to yield a (substituted) N-acetyl-beta-D-glucosaminylamine and a peptide containing an aspartate residue.. Functionally, specifically deglycosylates the denatured form of N-linked glycoproteins in the cytoplasm and assists their proteasome-mediated degradation. Cleaves the beta-aspartyl-glucosamine (GlcNAc) of the glycan and the amide side chain of Asn, converting Asn to Asp. Prefers proteins containing high-mannose over those bearing complex type oligosaccharides. Can recognize misfolded proteins in the endoplasmic reticulum that are exported to the cytosol to be destroyed and deglycosylate them, while it has no activity toward native proteins. Deglycosylation is a prerequisite for subsequent proteasome-mediated degradation of some, but not all, misfolded glycoproteins. The protein is Peptide-N(4)-(N-acetyl-beta-glucosaminyl)asparagine amidase (PNG1) of Arabidopsis thaliana (Mouse-ear cress).